The sequence spans 734 residues: Meiotic driver SPOK1 (734 aa).

Residues 4–41 (KDRIAQLLRELEEAKARVEEAKAREAQERCEKERLQLE) are a coiled coil. Disordered stretches follow at residues 180 to 222 (ELTQ…ICSN) and 414 to 499 (LSSA…MADP). Over residues 416–429 (SAPSSQNTDISEYT) the composition is skewed to polar residues. The span at 457–468 (NEHDEHDEDHSE) shows a compositional bias: basic and acidic residues.

Its subcellular location is the cytoplasm. The protein resides in the nucleus. Functionally, promotes unequal transmission of alleles from the parental zygote to progeny spores by acting as poison/antidote system, leading to poisoning of progeny that do not inherit the allele. May possess DNA nuclease activity that leads to spore killing, and a kinase activity that confers resistance to the nuclease activity. Can suppress meiotic drive by the P.anserina SPOK2, SPOK3 and SPOK4 proteins. The chain is Meiotic driver SPOK1 from Podospora comata.